Consider the following 78-residue polypeptide: MNDNNSCKLTMLTRRLENMTQEYGQPDLPVPFLNGDEPGKLKLPLSERHEDVDYLTKEQCIQYFNGYSIHLIPPRISS.

Belongs to the UPF0612 family.

The chain is UPF0612 protein new22 (new22) from Schizosaccharomyces pombe (strain 972 / ATCC 24843) (Fission yeast).